The chain runs to 341 residues: Mitochondrial protein C2orf69 homolog (341 aa).

Residues 1–35 constitute a mitochondrion transit peptide; it reads MLQVVQSPHNLVFMGSIRSVVACLSLAAVARKMTA.

This sequence belongs to the C2orf69 family.

The protein localises to the mitochondrion matrix. In terms of biological role, may play a role in the respiratory chain. The polypeptide is Mitochondrial protein C2orf69 homolog (Danio rerio (Zebrafish)).